The primary structure comprises 263 residues: MDPEAANNGEPRRITSVLNAVEIIDAIKEHRGITLQELTTELDLTKATIHTYMATLRQVGIVEQDGDGTYQLGDWFVPVSNYARNSTDLYRLGREEIDKLATQTRHTAHLVTESDGRQIVLYESMGEESVTTEYHLRMRETPRKLHTSAAGKSILAFLPEGRRETLISEIEFGTESSTPIGSPDALREQLATVRDQGYAINDEEEIHGIRSIGAPIRGRTEDVAGAVSVTAPKTRLQNAEFAGEVPALVMEAANIIEVRLETA.

An HTH iclR-type domain is found at 14–74; that stretch reads ITSVLNAVEI…DGDGTYQLGD (61 aa). A DNA-binding region (H-T-H motif) is located at residues 35-54; it reads LQELTTELDLTKATIHTYMA. The 174-residue stretch at 89-262 folds into the IclR-ED domain; it reads LYRLGREEID…ANIIEVRLET (174 aa).

Probably regulates transcription of the arcABC operon. The polypeptide is Probable HTH-type transcriptional regulator ArcR (arcR) (Halobacterium salinarum (strain ATCC 29341 / DSM 671 / R1)).